Here is a 194-residue protein sequence, read N- to C-terminus: MGMYKYIREAWKSPKKSYVGELLKQRMIKWRREPVVVRIERPTRLDRARALGYQAKQGYVIVRVRVRKGGRKRPRWKGGRKPSKMGQVKYSPKKSLQWIAEEKAARKFPNLEVLNSYWVGEDGMYKWFEVIMVDPHHPVIKSDPKIAWIALKHHKGRVFRGLTSAGKKGRGLRNKGKGAEKVRPSIRANEGKGK.

The tract at residues 165–194 (AGKKGRGLRNKGKGAEKVRPSIRANEGKGK) is disordered. Over residues 167–176 (KKGRGLRNKG) the composition is skewed to basic residues. The span at 177-194 (KGAEKVRPSIRANEGKGK) shows a compositional bias: basic and acidic residues.

The protein belongs to the eukaryotic ribosomal protein eL15 family. Part of the 50S ribosomal subunit.

The polypeptide is Large ribosomal subunit protein eL15 (Pyrococcus furiosus (strain ATCC 43587 / DSM 3638 / JCM 8422 / Vc1)).